The sequence spans 219 residues: Large ribosomal subunit protein uL16 (219 aa).

Belongs to the universal ribosomal protein uL16 family. In terms of assembly, component of the small ribosomal subunit. Mature ribosomes consist of a small (40S) and a large (60S) subunit. The 40S subunit contains about 33 different proteins and 1 molecule of RNA (18S). The 60S subunit contains about 49 different proteins and 3 molecules of RNA (25S, 5.8S and 5S).

This is Large ribosomal subunit protein uL16 (RPL10) from Encephalitozoon cuniculi (strain GB-M1) (Microsporidian parasite).